Reading from the N-terminus, the 332-residue chain is 2,3-diketo-L-gulonate reductase (332 aa).

The active-site Proton donor is H44. NAD(+)-binding positions include 168 to 174 (ITMVDMS), 224 to 225 (WK), and 304 to 306 (GHE).

The protein belongs to the LDH2/MDH2 oxidoreductase family. DlgD subfamily. Homodimer.

The protein localises to the cytoplasm. It carries out the reaction 3-dehydro-L-gulonate + NAD(+) = 2,3-dioxo-L-gulonate + NADH + H(+). The enzyme catalyses 3-dehydro-L-gulonate + NADP(+) = 2,3-dioxo-L-gulonate + NADPH + H(+). Its function is as follows. Catalyzes the reduction of 2,3-diketo-L-gulonate in the presence of NADH, to form 3-keto-L-gulonate. In Escherichia coli O8 (strain IAI1), this protein is 2,3-diketo-L-gulonate reductase.